A 146-amino-acid chain; its full sequence is Hydroxyproline-rich systemin (146 aa).

The first 24 residues, 1 to 24 (MISFFRAFFLIIIISFLIFVGAQA), serve as a signal peptide directing secretion. The propeptide occupies 25-48 (RTLLGNYHDDEMLIELKLESGNYG). The segment at 47-128 (YGRTPYKTPP…PPPPKPQDEQ (82 aa)) is disordered. A 4-hydroxyproline mark is found at proline 51, proline 55, proline 56, proline 57, proline 58, and proline 63. 6 O-linked (Ara...) hydroxyproline glycosylation sites follow: proline 51, proline 55, proline 56, proline 57, proline 58, and proline 63. A propeptide spanning residues 67–70 (EIVN) is cleaved from the precursor. A 4-hydroxyproline mark is found at proline 79, proline 80, and proline 82. 3 O-linked (Ara...) hydroxyproline glycosylation sites follow: proline 79, proline 80, and proline 82. Residues 86–110 (PIIGQLTTITTTPHHDDTVAAPPVG) constitute a propeptide that is removed on maturation. A 4-hydroxyproline mark is found at proline 119, proline 120, proline 121, and proline 122. O-linked (Ara...) hydroxyproline glycosylation is found at proline 119, proline 120, proline 121, and proline 122. The propeptide occupies 131–146 (IIITSSSSTLPLQASY).

Post-translationally, O-glycosylated; contains pentose side chains. In terms of tissue distribution, leaves.

It is found in the secreted. In terms of biological role, activates a lipid-based signal transduction pathway in which linolenic acid is converted to jasmonic acid, a potent activator of defense gene transcription. Induces synthesis of proteinase inhibitors I and II in leaves when supplied through cut stems. The chain is Hydroxyproline-rich systemin from Solanum lycopersicum (Tomato).